Consider the following 523-residue polypeptide: Cyclic di-GMP binding protein BcsE (523 aa).

The protein belongs to the BcsE family.

Required for cellulose biosynthesis. May have protease activity, but BcsA is not targeted. Binds bis-(3'-5') cyclic diguanylic acid (c-di-GMP). In Salmonella typhimurium (strain LT2 / SGSC1412 / ATCC 700720), this protein is Cyclic di-GMP binding protein BcsE.